A 152-amino-acid chain; its full sequence is Prostaglandin E synthase (152 aa).

Over 1–12 the chain is Lumenal; it reads MPAHSLVMSSPA. The chain crosses the membrane as a helical span at residues 13–41; sequence LPAFLLCSTLLVIKMYVVAIITGQVRLRK. Position 38 (arginine 38) interacts with glutathione. Residues 42-60 lie on the Cytoplasmic side of the membrane; the sequence is KAFANPEDALRHGGPQYCR. The helical transmembrane segment at 61–90 threads the bilayer; it reads SDPDVERCLRAHRNDMETIYPFLFLGFVYS. A glutathione-binding site is contributed by 73–77; the sequence is RNDME. The Lumenal portion of the chain corresponds to 91–95; the sequence is FLGPN. A helical membrane pass occupies residues 96–119; the sequence is PFVAWMHFLVFLVGRVAHTVAYLG. Residues histidine 113 and tyrosine 117 each coordinate glutathione. The Cytoplasmic segment spans residues 120–123; it reads KLRA. Residues 124 to 152 traverse the membrane as a helical segment; the sequence is PIRSVTYTLAQLPCASMALQILWEAARHL. 126-130 contributes to the glutathione binding site; sequence RSVTY.

It belongs to the MAPEG family. Homotrimer. It depends on glutathione as a cofactor.

The protein resides in the membrane. The protein localises to the cytoplasm. It localises to the perinuclear region. The catalysed reaction is prostaglandin H2 = prostaglandin E2. The enzyme catalyses 2-glyceryl-prostaglandin H2 = 2-glyceryl-prostaglandin E2. It carries out the reaction prostaglandin G2 = (15S)-15-hydroperoxy-prostaglandin E2. It catalyses the reaction 1-chloro-2,4-dinitrobenzene + glutathione = 2,4-dinitrophenyl-S-glutathione + chloride + H(+). The catalysed reaction is (5S)-hydroperoxy-(6E,8Z,11Z,14Z)-eicosatetraenoate + 2 glutathione = (5S)-hydroxy-(6E,8Z,11Z,14Z)-eicosatetraenoate + glutathione disulfide + H2O. The protein operates within lipid metabolism; prostaglandin biosynthesis. With respect to regulation, induced by interleukin IL1B. In terms of biological role, terminal enzyme of the cyclooxygenase (COX)-2-mediated prostaglandin E2 (PGE2) biosynthetic pathway. Catalyzes the glutathione-dependent oxidoreduction of prostaglandin endoperoxide H2 (PGH2) to prostaglandin E2 (PGE2) in response to inflammatory stimuli. Plays a key role in inflammation response, fever and pain. Also catalyzes the oxidoreduction of endocannabinoids into prostaglandin glycerol esters and PGG2 into 15-hydroperoxy-PGE2. In addition, displays low glutathione transferase and glutathione-dependent peroxidase activities, toward 1-chloro-2,4-dinitrobenzene and 5-hydroperoxyicosatetraenoic acid (5-HPETE), respectively. In Homo sapiens (Human), this protein is Prostaglandin E synthase (PTGES).